Reading from the N-terminus, the 588-residue chain is MKNNLPIKSRLLYKRLLSYVKPFWPVLLLGVLANILYSGIDAGFTYMTKLFLDKSFITIDLDFVKQIPLIVLIGITLRGLVSSLGSYCMTWVARSVVKVLRQTVFSHIIHLPADYYDEATSGQLLSKILYDVEQVAQVSADALTDFIQNICLVIGLLTVMMVICWQLSLMFLLTIPFVGIIVNYTNKRVRRISHKVQKTMGEVTEIASEAIEGYRVVRIFGGERYEITKFNKATEYSRKNDMKVAISKAINVSGVQLVIAIGIAMIIMAAIHLSTVITISAGSFLAIIAAMLQLIKPMKTLTTLNATIQRGLAGAESVFNLLDLPLERNNGLILKDKIRGEIEFKHVYHAYRQGQNILHDVNFVIEAGTSVALVGHSGSGKTTIASLLPRFYELSQGMITLDGMPIQQLSLESLRKQMSLVSQNVTLFNDTLANNIAYGRFDASREQIITAAKLAYADEFIKQLPDGYDTRVGENGVLLSGGQRQRIAIARAILKDAPILILDEATSALDSESEHYIQAALEQVMNGRTTLIIAHRLSTIKHAHKIIVMQHGRIVEQGSHQELLDMDGHYAQLYKVQQFGRVNEEVVV.

6 consecutive transmembrane segments (helical) span residues 23 to 43, 56 to 76, 141 to 161, 162 to 182, 257 to 277, and 278 to 298; these read FWPV…IDAG, FITI…IGIT, DALT…TVMM, VICW…GIIV, LVIA…STVI, and TISA…IKPM. The region spanning 28–310 is the ABC transmembrane type-1 domain; the sequence is LLGVLANILY…LTTLNATIQR (283 aa). One can recognise an ABC transporter domain in the interval 342-576; that stretch reads IEFKHVYHAY…DGHYAQLYKV (235 aa). 375–382 contacts ATP; that stretch reads GHSGSGKT.

It belongs to the ABC transporter superfamily. Lipid exporter (TC 3.A.1.106) family. Homodimer.

The protein localises to the cell inner membrane. The catalysed reaction is ATP + H2O + lipid A-core oligosaccharideSide 1 = ADP + phosphate + lipid A-core oligosaccharideSide 2.. Involved in lipopolysaccharide (LPS) biosynthesis. Translocates lipid A-core from the inner to the outer leaflet of the inner membrane. Transmembrane domains (TMD) form a pore in the inner membrane and the ATP-binding domain (NBD) is responsible for energy generation. The chain is ATP-dependent lipid A-core flippase from Legionella pneumophila (strain Lens).